The sequence spans 119 residues: MKKIAFVFSYVPHGVSLGREGLDLLLSVSIMNSKISVFFIGDGIFQLLKNQKPDEILSKNYVLSFKILPFFGIYDFFLCNESLKERGLFKKTDFLLDVSILSAIEIRNKLKNSDLIINF.

This sequence belongs to the DsrF/TusC family. Heterohexamer, formed by a dimer of trimers. The hexameric TusBCD complex contains 2 copies each of TusB, TusC and TusD. The TusBCD complex interacts with TusE.

It localises to the cytoplasm. In terms of biological role, part of a sulfur-relay system required for 2-thiolation of 5-methylaminomethyl-2-thiouridine (mnm(5)s(2)U) at tRNA wobble positions. The chain is Protein TusC from Buchnera aphidicola subsp. Baizongia pistaciae (strain Bp).